We begin with the raw amino-acid sequence, 273 residues long: Coiled-coil domain-containing protein 122 (273 aa).

A compositionally biased stretch (basic and acidic residues) spans 1-17; the sequence is MSDNKERKSQGFPKEDN. Residues 1-39 form a disordered region; the sequence is MSDNKERKSQGFPKEDNQDTSSLADAVEKVAKQQQSQAS. Coiled coils occupy residues 24–116 and 179–269; these read ADAV…TAQE and NRIT…RKCI.

In Homo sapiens (Human), this protein is Coiled-coil domain-containing protein 122 (CCDC122).